A 1076-amino-acid chain; its full sequence is DNA-directed RNA polymerase subunit beta (1076 aa).

This sequence belongs to the RNA polymerase beta chain family. As to quaternary structure, in plastids the minimal PEP RNA polymerase catalytic core is composed of four subunits: alpha, beta, beta', and beta''. When a (nuclear-encoded) sigma factor is associated with the core the holoenzyme is formed, which can initiate transcription.

The protein localises to the plastid. Its subcellular location is the chloroplast. It catalyses the reaction RNA(n) + a ribonucleoside 5'-triphosphate = RNA(n+1) + diphosphate. Its function is as follows. DNA-dependent RNA polymerase catalyzes the transcription of DNA into RNA using the four ribonucleoside triphosphates as substrates. This Agrostis stolonifera (Creeping bentgrass) protein is DNA-directed RNA polymerase subunit beta.